Here is a 500-residue protein sequence, read N- to C-terminus: L-arabinose isomerase (500 aa).

Mn(2+) contacts are provided by E306, E333, H350, and H450.

Belongs to the arabinose isomerase family. In terms of assembly, homohexamer. Mn(2+) is required as a cofactor.

It carries out the reaction beta-L-arabinopyranose = L-ribulose. It participates in carbohydrate degradation; L-arabinose degradation via L-ribulose; D-xylulose 5-phosphate from L-arabinose (bacterial route): step 1/3. In terms of biological role, catalyzes the conversion of L-arabinose to L-ribulose. This is L-arabinose isomerase from Escherichia coli O17:K52:H18 (strain UMN026 / ExPEC).